A 156-amino-acid polypeptide reads, in one-letter code: Ribosomal RNA large subunit methyltransferase H (156 aa).

S-adenosyl-L-methionine is bound by residues Leu-73, Gly-104, and 123–128; that span reads ISSMTL.

This sequence belongs to the RNA methyltransferase RlmH family. Homodimer.

The protein localises to the cytoplasm. The enzyme catalyses pseudouridine(1915) in 23S rRNA + S-adenosyl-L-methionine = N(3)-methylpseudouridine(1915) in 23S rRNA + S-adenosyl-L-homocysteine + H(+). Specifically methylates the pseudouridine at position 1915 (m3Psi1915) in 23S rRNA. The sequence is that of Ribosomal RNA large subunit methyltransferase H from Burkholderia lata (strain ATCC 17760 / DSM 23089 / LMG 22485 / NCIMB 9086 / R18194 / 383).